Here is a 423-residue protein sequence, read N- to C-terminus: MSSEAVSYFSHPFPRRQSVGVSVGGVIVGGSAPVVVQSMTNTDTADVDSTVAQVAALHRAGSEIVRITVDRDESAAAVPKIRERLERLGHDVPLVGDFHYIGHKLLADHPACAEALAKYRINPGNVGFKDKKDKQFADIVEMAIRYDKPVRIGVNWGSLDQELLTTLMDRNQDAGAPLSAQEVMREAIVQSALISANLAEEIGLGRDKIILSAKVSQVQDLIAVYTMLAQRSNHALHLGLTEAGMGTKGIVASSAAMGILLQQGIGDTIRISLTPEPGGDRTREVQVSQELLQTMGFRQFIPIVAACPGCGRTTSTVFQELAQTIQDDIRRNMPVWREKYPGVEALSVAVMGCIVNGPGESKHADIGISLPGTGETPSAPVFVDGKKVTTLRGPAIAEDFQKMVADYIENRFGLDQKIAAGQN.

4 residues coordinate [4Fe-4S] cluster: cysteine 307, cysteine 310, cysteine 353, and glutamate 360.

It belongs to the IspG family. The cofactor is [4Fe-4S] cluster.

It carries out the reaction (2E)-4-hydroxy-3-methylbut-2-enyl diphosphate + oxidized [flavodoxin] + H2O + 2 H(+) = 2-C-methyl-D-erythritol 2,4-cyclic diphosphate + reduced [flavodoxin]. It participates in isoprenoid biosynthesis; isopentenyl diphosphate biosynthesis via DXP pathway; isopentenyl diphosphate from 1-deoxy-D-xylulose 5-phosphate: step 5/6. Its function is as follows. Converts 2C-methyl-D-erythritol 2,4-cyclodiphosphate (ME-2,4cPP) into 1-hydroxy-2-methyl-2-(E)-butenyl 4-diphosphate. This Brucella anthropi (strain ATCC 49188 / DSM 6882 / CCUG 24695 / JCM 21032 / LMG 3331 / NBRC 15819 / NCTC 12168 / Alc 37) (Ochrobactrum anthropi) protein is 4-hydroxy-3-methylbut-2-en-1-yl diphosphate synthase (flavodoxin).